The chain runs to 154 residues: Aspartate carbamoyltransferase regulatory chain (154 aa).

Zn(2+) is bound by residues Cys-109, Cys-114, Cys-138, and Cys-141.

The protein belongs to the PyrI family. Contains catalytic and regulatory chains. Zn(2+) is required as a cofactor.

Functionally, involved in allosteric regulation of aspartate carbamoyltransferase. The chain is Aspartate carbamoyltransferase regulatory chain from Aliivibrio salmonicida (strain LFI1238) (Vibrio salmonicida (strain LFI1238)).